Consider the following 231-residue polypeptide: NADH-ubiquinone oxidoreductase chain 4 (231 aa).

6 helical membrane passes run 1-21 (PIAG…YGII), 34-54 (MFLP…LTCL), 63-85 (IAYS…TPWG), 89-111 (AMAL…NTTY), 128-148 (ILPM…AVPP), and 156-176 (LLIM…LGLS).

Belongs to the complex I subunit 4 family.

It is found in the mitochondrion membrane. The catalysed reaction is a ubiquinone + NADH + 5 H(+)(in) = a ubiquinol + NAD(+) + 4 H(+)(out). Its function is as follows. Core subunit of the mitochondrial membrane respiratory chain NADH dehydrogenase (Complex I) that is believed to belong to the minimal assembly required for catalysis. Complex I functions in the transfer of electrons from NADH to the respiratory chain. The immediate electron acceptor for the enzyme is believed to be ubiquinone. The polypeptide is NADH-ubiquinone oxidoreductase chain 4 (MT-ND4) (Agkistrodon contortrix contortrix (Southern copperhead)).